The primary structure comprises 61 residues: Metallothionein-I, hippocampal (61 aa).

Met1 carries the post-translational modification N-acetylmethionine. The segment at 1–29 (MDPNCSCATGDSCACASTCKCKECKCTSC) is beta. 18 residues coordinate a divalent metal cation: Cys5, Cys7, Cys13, Cys15, Cys19, Cys21, Cys24, Cys26, Cys29, Cys33, Cys34, Cys36, Cys37, Cys41, Cys44, Cys48, Cys50, and Cys57. Residues 30–61 (KKSCCSCCPVGCAKCAQGCICKGASDKCSCCA) form an alpha region. Ser58 carries the phosphoserine modification. Residues Cys59 and Cys60 each coordinate a divalent metal cation.

This sequence belongs to the metallothionein superfamily. Type 1 family.

Its function is as follows. Metallothioneins have a high content of cysteine residues that bind various heavy metals; these proteins are transcriptionally regulated by both heavy metals and glucocorticoids. This isoform may play a role in regulating the transport, accumulation, and compartmentation of zinc in the hippocampus. This is Metallothionein-I, hippocampal from Bos taurus (Bovine).